Reading from the N-terminus, the 330-residue chain is DNA primase small subunit PriS (330 aa).

Residues D101 and D103 contribute to the active site. Residues C116, C119, C128, and D131 each contribute to the Zn(2+) site. D235 is a catalytic residue.

This sequence belongs to the eukaryotic-type primase small subunit family. As to quaternary structure, heterodimer of a small subunit (PriS) and a large subunit (PriL). Mg(2+) is required as a cofactor. It depends on Mn(2+) as a cofactor.

Catalytic subunit of DNA primase, an RNA polymerase that catalyzes the synthesis of short RNA molecules used as primers for DNA polymerase during DNA replication. The small subunit contains the primase catalytic core and has DNA synthesis activity on its own. Binding to the large subunit stabilizes and modulates the activity, increasing the rate of DNA synthesis while decreasing the length of the DNA fragments, and conferring RNA synthesis capability. The DNA polymerase activity may enable DNA primase to also catalyze primer extension after primer synthesis. May also play a role in DNA repair. The protein is DNA primase small subunit PriS of Saccharolobus islandicus (strain M.16.27) (Sulfolobus islandicus).